Consider the following 283-residue polypeptide: Protease HtpX (283 aa).

Transmembrane regions (helical) follow at residues 4–24 and 33–53; these read ILLF…ILNV and GGIL…SLFL. A Zn(2+)-binding site is contributed by His139. Glu140 is an active-site residue. Residue His143 participates in Zn(2+) binding. 2 consecutive transmembrane segments (helical) span residues 147 to 167 and 190 to 210; these read GDMV…IFLS and IYFL…SIIA. Glu218 lines the Zn(2+) pocket.

The protein belongs to the peptidase M48B family. Zn(2+) serves as cofactor.

It is found in the cell inner membrane. The polypeptide is Protease HtpX (Haemophilus influenzae (strain 86-028NP)).